The primary structure comprises 548 residues: Membrane protein insertase YidC (548 aa).

Residues 6 to 26 (NLLVIALLFVSFMIWQAWEQD) traverse the membrane as a helical segment. The interval 28–56 (NPQPQTQQTTQTTTTAAGSAADQGVPASG) is disordered. The segment covering 29-42 (PQPQTQQTTQTTTT) has biased composition (low complexity). A run of 4 helical transmembrane segments spans residues 350–370 (FVGNWGFSIIIITFIVRGIMY), 424–444 (FPLIIQMPIFLALYYMLMGSI), 458–478 (LSAQDPYYILPILMGVTMFFI), and 499–519 (PVIFTVFFLWFPSGLVLYYIV).

This sequence belongs to the OXA1/ALB3/YidC family. Type 1 subfamily. In terms of assembly, interacts with the Sec translocase complex via SecD. Specifically interacts with transmembrane segments of nascent integral membrane proteins during membrane integration.

It is found in the cell inner membrane. Required for the insertion and/or proper folding and/or complex formation of integral membrane proteins into the membrane. Involved in integration of membrane proteins that insert both dependently and independently of the Sec translocase complex, as well as at least some lipoproteins. Aids folding of multispanning membrane proteins. The chain is Membrane protein insertase YidC from Salmonella choleraesuis (strain SC-B67).